Here is a 325-residue protein sequence, read N- to C-terminus: NADH-quinone oxidoreductase subunit H (325 aa).

8 consecutive transmembrane segments (helical) span residues 8-28 (VIDI…VVTC), 81-101 (GIFT…FAIV), 114-134 (IGVL…LFAG), 159-179 (FLGL…LGAI), 186-206 (LWNV…GVAV), 237-257 (FFVG…TLFF), 265-285 (LPPF…FILI), and 304-324 (ICLP…LYNA).

It belongs to the complex I subunit 1 family. As to quaternary structure, NDH-1 is composed of 13 different subunits. Subunits NuoA, H, J, K, L, M, N constitute the membrane sector of the complex.

The protein localises to the cell inner membrane. The catalysed reaction is a quinone + NADH + 5 H(+)(in) = a quinol + NAD(+) + 4 H(+)(out). Its function is as follows. NDH-1 shuttles electrons from NADH, via FMN and iron-sulfur (Fe-S) centers, to quinones in the respiratory chain. The immediate electron acceptor for the enzyme in this species is believed to be ubiquinone. Couples the redox reaction to proton translocation (for every two electrons transferred, four hydrogen ions are translocated across the cytoplasmic membrane), and thus conserves the redox energy in a proton gradient. This subunit may bind ubiquinone. The chain is NADH-quinone oxidoreductase subunit H from Sodalis glossinidius (strain morsitans).